The chain runs to 351 residues: Photosystem II D2 protein (351 aa).

A helical transmembrane segment spans residues 39 to 59 (TAYLAVGGWFTGTTFVTSWYT). H116 is a binding site for chlorophyll a. The chain crosses the membrane as a helical span at residues 123 to 139 (GFCLRQFEIARLVGIRP). Q128 and N141 together coordinate pheophytin a. A helical transmembrane segment spans residues 151 to 164 (IFVSVFLLYPLGQA). H196 lines the chlorophyll a pocket. Residues 206 to 226 (GALLCAIHGATVENTLFEDGD) traverse the membrane as a helical segment. H213 and F260 together coordinate a plastoquinone. H213 contacts Fe cation. H267 contacts Fe cation. A helical membrane pass occupies residues 277 to 293 (GLWTSAIGIVGLALNLR).

Belongs to the reaction center PufL/M/PsbA/D family. PSII is composed of 1 copy each of membrane proteins PsbA, PsbB, PsbC, PsbD, PsbE, PsbF, PsbH, PsbI, PsbJ, PsbK, PsbL, PsbM, PsbT, PsbX, PsbY, PsbZ, Psb30/Ycf12, at least 3 peripheral proteins of the oxygen-evolving complex and a large number of cofactors. It forms dimeric complexes. Requires The D1/D2 heterodimer binds P680, chlorophylls that are the primary electron donor of PSII, and subsequent electron acceptors. It shares a non-heme iron and each subunit binds pheophytin, quinone, additional chlorophylls, carotenoids and lipids. There is also a Cl(-1) ion associated with D1 and D2, which is required for oxygen evolution. The PSII complex binds additional chlorophylls, carotenoids and specific lipids. as cofactor.

The protein resides in the plastid. It localises to the chloroplast thylakoid membrane. The enzyme catalyses 2 a plastoquinone + 4 hnu + 2 H2O = 2 a plastoquinol + O2. Its function is as follows. Photosystem II (PSII) is a light-driven water:plastoquinone oxidoreductase that uses light energy to abstract electrons from H(2)O, generating O(2) and a proton gradient subsequently used for ATP formation. It consists of a core antenna complex that captures photons, and an electron transfer chain that converts photonic excitation into a charge separation. The D1/D2 (PsbA/PsbD) reaction center heterodimer binds P680, the primary electron donor of PSII as well as several subsequent electron acceptors. D2 is needed for assembly of a stable PSII complex. This chain is Photosystem II D2 protein, found in Heterosigma akashiwo (strain NIES-293 / 8280G21-1).